The primary structure comprises 316 residues: MST50-interacting protein 11 (316 aa).

WD repeat units lie at residues 13-53, 61-100, 103-142, 146-187, 190-229, 231-269, and 281-316; these read GHNG…TSYG, GHSH…TTRR, GHTN…KYTI, GHSE…LQTD, GHTG…HLYS, NAND…KVDE, and SREP…MSRA.

The protein belongs to the WD repeat G protein beta family. Ribosomal protein RACK1 subfamily. In terms of assembly, interacts with MST50 and MCK1.

Involved in regulating the cell wall integrity and MPS1 activation via its interaction with the MAPKKK MCK1. The protein is MST50-interacting protein 11 of Pyricularia oryzae (strain 70-15 / ATCC MYA-4617 / FGSC 8958) (Rice blast fungus).